The following is a 970-amino-acid chain: Translation initiation factor IF-2 (970 aa).

Disordered stretches follow at residues 54–270 (KILA…TATQ) and 328–348 (DKRRGRTPGRPMSEEQAKSLS). Residues 87-96 (QEAQPVEAQP) are compositionally biased toward low complexity. Over residues 98 to 112 (YEEQPSYEEQPSYEE) the composition is skewed to polar residues. Residues 121-149 (EVAAEAAPEPVEEPASSPEGGAPAGGAEP) are compositionally biased toward low complexity. Pro residues-rich tracts occupy residues 150-160 (QPAPEAPPPSA) and 168-182 (PSAPPSPAVRPPAPS). A compositionally biased stretch (low complexity) spans 183 to 253 (VPAGAQPPGA…PHGPGAQPGQ (71 aa)). One can recognise a tr-type G domain in the interval 469 to 638 (IRPPVVTVMG…ALQSEVLELK (170 aa)). Residues 478-485 (GHVDHGKT) form a G1 region. 478-485 (GHVDHGKT) lines the GTP pocket. The tract at residues 503-507 (GITQH) is G2. The tract at residues 524–527 (DTPG) is G3. Residues 524 to 528 (DTPGH) and 578 to 581 (NKID) contribute to the GTP site. The tract at residues 578–581 (NKID) is G4. A G5 region spans residues 614-616 (SAR).

The protein belongs to the TRAFAC class translation factor GTPase superfamily. Classic translation factor GTPase family. IF-2 subfamily.

Its subcellular location is the cytoplasm. In terms of biological role, one of the essential components for the initiation of protein synthesis. Protects formylmethionyl-tRNA from spontaneous hydrolysis and promotes its binding to the 30S ribosomal subunits. Also involved in the hydrolysis of GTP during the formation of the 70S ribosomal complex. The sequence is that of Translation initiation factor IF-2 from Anaeromyxobacter sp. (strain Fw109-5).